Here is a 372-residue protein sequence, read N- to C-terminus: Homoserine dehydrogenase (372 aa).

NAD(+) is bound by residues valine 13, glycine 15, valine 16, and threonine 99. Positions 16 and 99 each coordinate NADP(+). NADPH-binding residues include valine 16, threonine 99, serine 100, and lysine 123. Lysine 123 is a binding site for NADP(+). Positions 150, 153, 155, and 157 each coordinate Na(+). Residues glycine 216 and glutamate 219 each coordinate NADP(+). Glutamate 219 and aspartate 230 together coordinate L-homoserine. The Proton donor role is filled by lysine 234. NAD(+) is bound at residue glycine 352. NADP(+) is bound at residue glycine 352. Glycine 352 provides a ligand contact to NADPH.

Belongs to the homoserine dehydrogenase family. In terms of assembly, homodimer. A metal cation is required as a cofactor.

The enzyme catalyses L-homoserine + NADP(+) = L-aspartate 4-semialdehyde + NADPH + H(+). It catalyses the reaction L-homoserine + NAD(+) = L-aspartate 4-semialdehyde + NADH + H(+). The protein operates within amino-acid biosynthesis; L-methionine biosynthesis via de novo pathway; L-homoserine from L-aspartate: step 3/3. It functions in the pathway amino-acid biosynthesis; L-threonine biosynthesis; L-threonine from L-aspartate: step 3/5. Functionally, catalyzes the conversion of L-aspartate-beta-semialdehyde (L-Asa) to L-homoserine (L-Hse), the third step in the biosynthesis of amino acids that derive from aspartate (the aspartate family of amino acids), including methioinine and threonine, the latter of which is a precursor to isoleucine; production of homoserine leads to a branch-point in the pathway as it can either be O-phosphorylated for processing to threonine, or O-acylated for processing to methionine. This Paracoccidioides brasiliensis (strain Pb18) protein is Homoserine dehydrogenase.